Consider the following 209-residue polypeptide: Uracil phosphoribosyltransferase (209 aa).

5-phospho-alpha-D-ribose 1-diphosphate is bound by residues Arg79, Arg104, and Asp131 to Ser139. Residues Ile194 and Gly199–Ala201 each bind uracil. Residue Asp200 participates in 5-phospho-alpha-D-ribose 1-diphosphate binding.

The protein belongs to the UPRTase family. It depends on Mg(2+) as a cofactor.

It catalyses the reaction UMP + diphosphate = 5-phospho-alpha-D-ribose 1-diphosphate + uracil. The protein operates within pyrimidine metabolism; UMP biosynthesis via salvage pathway; UMP from uracil: step 1/1. With respect to regulation, allosterically activated by GTP. Its function is as follows. Catalyzes the conversion of uracil and 5-phospho-alpha-D-ribose 1-diphosphate (PRPP) to UMP and diphosphate. The sequence is that of Uracil phosphoribosyltransferase from Bacillus velezensis (strain DSM 23117 / BGSC 10A6 / LMG 26770 / FZB42) (Bacillus amyloliquefaciens subsp. plantarum).